A 276-amino-acid polypeptide reads, in one-letter code: Large ribosomal subunit protein uL2 (276 aa).

2 disordered regions span residues 36 to 58 (PLHKKGGRNNQGKMTVRHQGGGH) and 214 to 276 (LGKR…RRKK).

This sequence belongs to the universal ribosomal protein uL2 family. As to quaternary structure, part of the 50S ribosomal subunit. Forms a bridge to the 30S subunit in the 70S ribosome.

Functionally, one of the primary rRNA binding proteins. Required for association of the 30S and 50S subunits to form the 70S ribosome, for tRNA binding and peptide bond formation. It has been suggested to have peptidyltransferase activity; this is somewhat controversial. Makes several contacts with the 16S rRNA in the 70S ribosome. The sequence is that of Large ribosomal subunit protein uL2 from Halalkalibacterium halodurans (strain ATCC BAA-125 / DSM 18197 / FERM 7344 / JCM 9153 / C-125) (Bacillus halodurans).